Reading from the N-terminus, the 386-residue chain is Homeobox protein Hox-A13 (386 aa).

The homeobox DNA-binding region spans 320-379 (GRKKRVPYTKVQLKELEREYATNKFITKDKRRRISATTNLSERQVTIWFQNRRVKEKKVI).

It belongs to the Abd-B homeobox family. In terms of assembly, binds DNA as a homodimer. Interacts with MEIS1, MEIS2 and MEIS3.

The protein localises to the nucleus. In terms of biological role, sequence-specific, AT-rich binding transcription factor which is part of a developmental regulatory system that provides cells with specific positional identities on the anterior-posterior axis. This Mus musculus (Mouse) protein is Homeobox protein Hox-A13 (Hoxa13).